The sequence spans 274 residues: Leucine-rich repeat-containing protein 10 (274 aa).

8 LRR repeats span residues L30–F51, T52–L74, N76–L97, K98–L120, Q121–L143, L145–L166, R167–M189, and F191–N213. Positions R236 to S274 are disordered. Basic and acidic residues predominate over residues R239–R250. Residues E264–S274 show a composition bias toward pro residues.

Detected specifically in the heart.

The protein localises to the nucleus. Functionally, may play important roles in cardiac development and/or cardiac function. The polypeptide is Leucine-rich repeat-containing protein 10 (Lrrc10) (Mus musculus (Mouse)).